A 122-amino-acid polypeptide reads, in one-letter code: MLKKVSKNTNRQGRHQRVRNKITGTSQRPRLNVYRSLNHIYAQVIDDVAGITLVAASTLDEAIKSQVEASGNQDAAKLVGELVGKRALEKGVSTVTFDRGGYIYHGRVKALADGAREAGLKF.

Residues 1 to 20 (MLKKVSKNTNRQGRHQRVRN) show a composition bias toward basic residues. Positions 1–22 (MLKKVSKNTNRQGRHQRVRNKI) are disordered.

This sequence belongs to the universal ribosomal protein uL18 family. In terms of assembly, part of the 50S ribosomal subunit; part of the 5S rRNA/L5/L18/L25 subcomplex. Contacts the 5S and 23S rRNAs.

Functionally, this is one of the proteins that bind and probably mediate the attachment of the 5S RNA into the large ribosomal subunit, where it forms part of the central protuberance. The polypeptide is Large ribosomal subunit protein uL18 (Alkaliphilus metalliredigens (strain QYMF)).